Here is a 140-residue protein sequence, read N- to C-terminus: Transcription antitermination protein NusB (140 aa).

Belongs to the NusB family.

Its function is as follows. Involved in transcription antitermination. Required for transcription of ribosomal RNA (rRNA) genes. Binds specifically to the boxA antiterminator sequence of the ribosomal RNA (rrn) operons. This Streptococcus pneumoniae serotype 2 (strain D39 / NCTC 7466) protein is Transcription antitermination protein NusB.